We begin with the raw amino-acid sequence, 129 residues long: uncharacterized protein (129 aa).

Residues 44–63 (PYRAADRSNDQDNDRSGGNV) are disordered. Basic and acidic residues predominate over residues 46–58 (RAADRSNDQDNDR). 2 helical membrane-spanning segments follow: residues 78–98 (IISL…VGYI) and 109–129 (AWAM…IPFF).

It is found in the cell membrane. This is an uncharacterized protein from Bacillus subtilis (strain 168).